Reading from the N-terminus, the 29-residue chain is Cyclotide vibi-C (29 aa).

Positions 1–29 (GLPVCGETCAFGSCYTPGCSCSWPVCTRN) form a cross-link, cyclopeptide (Gly-Asn). Disulfide bonds link Cys5–Cys19, Cys9–Cys21, and Cys14–Cys26.

In terms of processing, this is a cyclic peptide.

Functionally, probably participates in a plant defense mechanism. This is Cyclotide vibi-C from Viola biflora (Yellow wood violet).